A 214-amino-acid polypeptide reads, in one-letter code: Ribosomal RNA small subunit methyltransferase G (214 aa).

Residues Gly81, Met86, 132-133 (VE), and Arg147 each bind S-adenosyl-L-methionine.

Belongs to the methyltransferase superfamily. RNA methyltransferase RsmG family.

The protein resides in the cytoplasm. It catalyses the reaction guanosine(527) in 16S rRNA + S-adenosyl-L-methionine = N(7)-methylguanosine(527) in 16S rRNA + S-adenosyl-L-homocysteine. In terms of biological role, specifically methylates the N7 position of guanine in position 527 of 16S rRNA. The protein is Ribosomal RNA small subunit methyltransferase G of Pseudomonas fluorescens (strain Pf0-1).